We begin with the raw amino-acid sequence, 156 residues long: ATP synthase subunit b (156 aa).

A helical membrane pass occupies residues 12–32; sequence VAFFIFVLFCMKYVWPPVIAA.

The protein belongs to the ATPase B chain family. In terms of assembly, F-type ATPases have 2 components, F(1) - the catalytic core - and F(0) - the membrane proton channel. F(1) has five subunits: alpha(3), beta(3), gamma(1), delta(1), epsilon(1). F(0) has three main subunits: a(1), b(2) and c(10-14). The alpha and beta chains form an alternating ring which encloses part of the gamma chain. F(1) is attached to F(0) by a central stalk formed by the gamma and epsilon chains, while a peripheral stalk is formed by the delta and b chains.

It localises to the cell inner membrane. Functionally, f(1)F(0) ATP synthase produces ATP from ADP in the presence of a proton or sodium gradient. F-type ATPases consist of two structural domains, F(1) containing the extramembraneous catalytic core and F(0) containing the membrane proton channel, linked together by a central stalk and a peripheral stalk. During catalysis, ATP synthesis in the catalytic domain of F(1) is coupled via a rotary mechanism of the central stalk subunits to proton translocation. Its function is as follows. Component of the F(0) channel, it forms part of the peripheral stalk, linking F(1) to F(0). This chain is ATP synthase subunit b, found in Pseudomonas syringae pv. tomato (strain ATCC BAA-871 / DC3000).